A 210-amino-acid polypeptide reads, in one-letter code: Leucyl/phenylalanyl-tRNA--protein transferase (210 aa).

This sequence belongs to the L/F-transferase family.

Its subcellular location is the cytoplasm. It catalyses the reaction N-terminal L-lysyl-[protein] + L-leucyl-tRNA(Leu) = N-terminal L-leucyl-L-lysyl-[protein] + tRNA(Leu) + H(+). The catalysed reaction is N-terminal L-arginyl-[protein] + L-leucyl-tRNA(Leu) = N-terminal L-leucyl-L-arginyl-[protein] + tRNA(Leu) + H(+). The enzyme catalyses L-phenylalanyl-tRNA(Phe) + an N-terminal L-alpha-aminoacyl-[protein] = an N-terminal L-phenylalanyl-L-alpha-aminoacyl-[protein] + tRNA(Phe). In terms of biological role, functions in the N-end rule pathway of protein degradation where it conjugates Leu, Phe and, less efficiently, Met from aminoacyl-tRNAs to the N-termini of proteins containing an N-terminal arginine or lysine. This Deinococcus radiodurans (strain ATCC 13939 / DSM 20539 / JCM 16871 / CCUG 27074 / LMG 4051 / NBRC 15346 / NCIMB 9279 / VKM B-1422 / R1) protein is Leucyl/phenylalanyl-tRNA--protein transferase.